The primary structure comprises 268 residues: Tryptophan synthase alpha chain (268 aa).

Catalysis depends on proton acceptor residues glutamate 49 and aspartate 60.

It belongs to the TrpA family. Tetramer of two alpha and two beta chains.

The enzyme catalyses (1S,2R)-1-C-(indol-3-yl)glycerol 3-phosphate + L-serine = D-glyceraldehyde 3-phosphate + L-tryptophan + H2O. It functions in the pathway amino-acid biosynthesis; L-tryptophan biosynthesis; L-tryptophan from chorismate: step 5/5. The alpha subunit is responsible for the aldol cleavage of indoleglycerol phosphate to indole and glyceraldehyde 3-phosphate. The chain is Tryptophan synthase alpha chain from Pseudomonas aeruginosa (strain LESB58).